Consider the following 507-residue polypeptide: Rho GTPase-activating protein 19 (507 aa).

A Rho-GAP domain is found at 112 to 305 (APLTEEGIAQ…FMIKHSQKLF (194 aa)). Disordered regions lie at residues 344 to 371 (FLKH…QQHT), 400 to 419 (KNTP…KKHV), and 483 to 507 (DLQI…ETSI). The segment covering 355–369 (SSPSSSTSLQEQTQQ) has biased composition (low complexity). A compositionally biased stretch (polar residues) spans 400 to 413 (KNTPRTPVSDTQVP). Over residues 483–492 (DLQIRKEASS) the composition is skewed to basic and acidic residues.

GTPase activator for the Rho-type GTPases by converting them to an inactive GDP-bound state. The polypeptide is Rho GTPase-activating protein 19 (arhgap19) (Xenopus laevis (African clawed frog)).